Consider the following 117-residue polypeptide: Large ribosomal subunit protein bL19 (117 aa).

This sequence belongs to the bacterial ribosomal protein bL19 family.

In terms of biological role, this protein is located at the 30S-50S ribosomal subunit interface and may play a role in the structure and function of the aminoacyl-tRNA binding site. This chain is Large ribosomal subunit protein bL19, found in Azobacteroides pseudotrichonymphae genomovar. CFP2.